Here is a 211-residue protein sequence, read N- to C-terminus: MSAKRVEPKKTSLSKNYRAVCLELKPEPIKTYDYKGAKQEGPFTKPGGTKELKNELREVREEMKEKMEEIKQIKDVMDKDFDKLQEFVEIMKEMQKDMDEKMDVLINIQKNSKFPLRRGLKMQQELRLIGKTDTEPQLRLRKMDGAGGAPLSLHKKMVERQQPKDPMDPLHQCDSCFEKCLLCTPQNNYDRGKLPYHAWASFSPLASGPAF.

Positions 47–111 (GGTKELKNEL…MDVLINIQKN (65 aa)) form a coiled coil.

This is Testis-expressed protein 35 (Tex35) from Bos taurus (Bovine).